A 574-amino-acid chain; its full sequence is Laccase-12 (574 aa).

Residues 1 to 27 (MAAASSVLRCCLLVAALMTLSAMGAEA) form the signal peptide. 2 consecutive Plastocyanin-like domains span residues 35 to 151 (DVQT…PPAG) and 161 to 314 (EEVP…YDDP). The N-linked (GlcNAc...) asparagine glycan is linked to Asn-81. Cu cation is bound by residues His-85, His-87, His-130, and His-132. N-linked (GlcNAc...) asparagine glycosylation is found at Asn-173, Asn-190, Asn-206, Asn-242, Asn-302, Asn-335, Asn-342, Asn-381, Asn-388, Asn-398, Asn-434, Asn-441, and Asn-447. The Plastocyanin-like 3 domain occupies 424–558 (NFPYYPLNPF…KMAWLVLDGS (135 aa)). Cu cation is bound by residues His-475, His-478, His-480, His-537, Cys-538, His-539, and His-543.

Belongs to the multicopper oxidase family. Cu cation serves as cofactor.

It localises to the secreted. Its subcellular location is the extracellular space. It is found in the apoplast. The enzyme catalyses 4 hydroquinone + O2 = 4 benzosemiquinone + 2 H2O. Its function is as follows. Lignin degradation and detoxification of lignin-derived products. This is Laccase-12 (LAC12) from Oryza sativa subsp. japonica (Rice).